The following is a 499-amino-acid chain: MEEFKRYLELDRSQQHDFVYPLIFQEYIYALAHDHGLTRSIFLENIGYDNKFSLLIVKHLIIQMYQQNHFLFSANDSNQNPFFGHNTNLYSQMILEGFVAVVEIPFSLFSLEGKEIVKSQNLRSIHSIFPFLEDKFSHLNYVLDILIPHSIHLEISVQTLRYWVKDASSLYLLRFFLHMYWNWNSLITPKKSSFYFSKRNQRLFLFLYNFHICEYESIFVFLRKQSSHLRSISSGTFLERRYFYGKIEHFLEVFTKDFQVILWLFKDPFIHYVRYQGKYILASKGTSLLMNKWKSYLVNFWQCYFYMWSQPGRIHINQLSKHSPDFLGYLSSVRLNPSMVRSQMLENSFLIGNAIKRFDTIVPIIPMIGSLSKAKFCNVLGHPISKPVWADLSNSDIIDRFGRIYRNLSHYHSGSSKKTSLYRIKYILRLSCARTLARKHKSTVRAFLKRLGSELLEEFFMGEEQVFSLTFPSSTSQGLYRRRIWYLDIVCINDLASHE.

The protein belongs to the intron maturase 2 family. MatK subfamily.

The protein localises to the plastid. It localises to the chloroplast. In terms of biological role, usually encoded in the trnK tRNA gene intron. Probably assists in splicing its own and other chloroplast group II introns. The sequence is that of Maturase K from Camellia sinensis (Tea plant).